A 299-amino-acid chain; its full sequence is GTPase Era (299 aa).

Residues 5 to 175 (RSGFVCLVGR…IDVLAAALPP (171 aa)) form the Era-type G domain. The segment at 13–20 (GRPNTGKS) is G1. GTP is bound at residue 13–20 (GRPNTGKS). Residues 39–43 (QTTRH) form a G2 region. A G3 region spans residues 60–63 (DTPG). Residues 60–64 (DTPGL) and 124–127 (TKID) contribute to the GTP site. The tract at residues 124-127 (TKID) is G4. Residues 154 to 156 (VSA) form a G5 region. Residues 206–285 (VRDELPHSLA…YLDLRVKVAK (80 aa)) enclose the KH type-2 domain.

Belongs to the TRAFAC class TrmE-Era-EngA-EngB-Septin-like GTPase superfamily. Era GTPase family. In terms of assembly, monomer.

Its subcellular location is the cell envelope. The protein resides in the secreted. It is found in the cell wall. Its function is as follows. Exhibits GTPase activity. Binds RNA but is probably not involved in ribosome assembly in mycobacteria. This Mycobacterium avium (strain 104) protein is GTPase Era.